The chain runs to 503 residues: ATP synthase subunit alpha (503 aa).

Glycine 170–threonine 177 contacts ATP.

The protein belongs to the ATPase alpha/beta chains family. F-type ATPases have 2 components, CF(1) - the catalytic core - and CF(0) - the membrane proton channel. CF(1) has five subunits: alpha(3), beta(3), gamma(1), delta(1), epsilon(1). CF(0) has three main subunits: a(1), b(2) and c(9-12). The alpha and beta chains form an alternating ring which encloses part of the gamma chain. CF(1) is attached to CF(0) by a central stalk formed by the gamma and epsilon chains, while a peripheral stalk is formed by the delta and b chains.

It localises to the cell inner membrane. The catalysed reaction is ATP + H2O + 4 H(+)(in) = ADP + phosphate + 5 H(+)(out). Functionally, produces ATP from ADP in the presence of a proton gradient across the membrane. The alpha chain is a regulatory subunit. This Pseudothermotoga lettingae (strain ATCC BAA-301 / DSM 14385 / NBRC 107922 / TMO) (Thermotoga lettingae) protein is ATP synthase subunit alpha.